The primary structure comprises 214 residues: 3,4-dihydroxy-2-butanone 4-phosphate synthase (214 aa).

D-ribulose 5-phosphate-binding positions include 37 to 38, Asp42, 150 to 154, and Glu174; these read RE and RRGHT. Residue Glu38 coordinates Mg(2+). His153 serves as a coordination point for Mg(2+).

The protein belongs to the DHBP synthase family. Homodimer. Requires Mg(2+) as cofactor. Mn(2+) is required as a cofactor.

It catalyses the reaction D-ribulose 5-phosphate = (2S)-2-hydroxy-3-oxobutyl phosphate + formate + H(+). Its pathway is cofactor biosynthesis; riboflavin biosynthesis; 2-hydroxy-3-oxobutyl phosphate from D-ribulose 5-phosphate: step 1/1. Its function is as follows. Catalyzes the conversion of D-ribulose 5-phosphate to formate and 3,4-dihydroxy-2-butanone 4-phosphate. This Histophilus somni (strain 2336) (Haemophilus somnus) protein is 3,4-dihydroxy-2-butanone 4-phosphate synthase.